The following is an 859-amino-acid chain: Active breakpoint cluster region-related protein (859 aa).

A disordered region spans residues 31–84; that stretch reads AEGHEEQKGPPEGSETMPYIDESPTMSPQLSARSQGGGESISPTPPEGLAPGVE. Polar residues predominate over residues 54 to 64; that stretch reads PTMSPQLSARS. Residue Ser-57 is modified to Phosphoserine. Positions 91–284 constitute a DH domain; it reads MRKLVLSGFL…QNFLSSINED (194 aa). Residues 301–459 form the PH domain; it reads QLVKDGFLVE…WREAIQKLQK (159 aa). The C2 domain maps to 484-613; that stretch reads TVHNIPVTSN…ESKNWHTDVI (130 aa). One can recognise a Rho-GAP domain in the interval 647–845; the sequence is VKISVVTKRE…YYLQHPPISF (199 aa).

In terms of assembly, interacts with DLG4. Expressed in brain, including the cortex, hippocampus, cerebellum, and brainstem, as well as the spinal cord (at protein level).

The protein localises to the cell projection. Its subcellular location is the dendritic spine. It localises to the axon. The protein resides in the synapse. In terms of biological role, protein with a unique structure having two opposing regulatory activities toward small GTP-binding proteins. The C-terminus is a GTPase-activating protein domain which stimulates GTP hydrolysis by RAC1, RAC2 and CDC42. Accelerates the intrinsic rate of GTP hydrolysis of RAC1 or CDC42, leading to down-regulation of the active GTP-bound form. The central Dbl homology (DH) domain functions as guanine nucleotide exchange factor (GEF) that modulates the GTPases CDC42, RHOA and RAC1. Promotes the conversion of CDC42, RHOA and RAC1 from the GDP-bound to the GTP-bound form. Functions as an important negative regulator of neuronal RAC1 activity. Regulates macrophage functions such as CSF-1 directed motility and phagocytosis through the modulation of RAC1 activity. This is Active breakpoint cluster region-related protein from Rattus norvegicus (Rat).